The following is a 446-amino-acid chain: NAD kinase (446 aa).

A phosphoserine mark is found at serine 46, serine 48, serine 50, serine 55, and serine 64.

The protein belongs to the NAD kinase family. A divalent metal cation serves as cofactor. In terms of tissue distribution, widely expressed but not detected in skeletal muscle.

It catalyses the reaction NAD(+) + ATP = ADP + NADP(+) + H(+). The sequence is that of NAD kinase (NADK) from Homo sapiens (Human).